Here is a 1076-residue protein sequence, read N- to C-terminus: Probable cellulose synthase A catalytic subunit 1 [UDP-forming] (1076 aa).

Residues 1–267 (MAANAGMVAG…SRIVPIPSNQ (267 aa)) lie on the Cytoplasmic side of the membrane. Zn(2+)-binding residues include Cys41, Cys44, Cys60, Cys63, Cys68, Cys71, Cys83, and Cys86. An RING-type; degenerate zinc finger spans residues 41–87 (CQICGDTVGVSATGDVFVACNECAFPVCRPCYEYERKEGNQCCPQCK). Positions 119–179 (HGNGKGPEWQ…HSIRSGTSSY (61 aa)) are disordered. The chain crosses the membrane as a helical span at residues 268 to 288 (LNLYRIVIILRLIILMFFFQY). The Extracellular segment spans residues 289–296 (RVTHPVRD). The chain crosses the membrane as a helical span at residues 297–317 (AYGLWLVSVICEIWFALSWLL). Residues 318–851 (DQFPKWYPIN…LLERLAYINT (534 aa)) are Cytoplasmic-facing. 4 residues coordinate UDP-alpha-D-glucose: Ser356, Lys362, Glu363, and Asp392. The active site involves Asp392. The stretch at 446–473 (VKERRAMKREYEEFKVRINALVAKAQKV) forms a coiled coil. Residue Lys533 participates in UDP-alpha-D-glucose binding. Residues Lys534 and Asp558 each coordinate Mn(2+). Residue Asp775 is part of the active site. A helical membrane pass occupies residues 852 to 872 (IVYPITSIPLIAYCVLPAICL). The Extracellular portion of the chain corresponds to 873–884 (LTNKFIIPEISN). A helical transmembrane segment spans residues 885 to 905 (YAGMFFILLFASIFATGILEL). Residues 906-920 (RWSGVGIEDWWRNEQ) lie on the Cytoplasmic side of the membrane. A helical membrane pass occupies residues 921–941 (FWVIGGTSAHLFAVFQGLLKV). Over 942 to 971 (LAGIDTNFTVTSKASDEDGDFAELYVFKWT) the chain is Extracellular. Residue Asn948 is glycosylated (N-linked (GlcNAc...) asparagine). Residues 972–992 (SLLIPPTTVLVINLVGMVAGI) form a helical membrane-spanning segment. At 993–1003 (SYAINSGYQSW) the chain is on the cytoplasmic side. The helical transmembrane segment at 1004–1024 (GPLFGKLFFSIWVILHLYPFL) threads the bilayer. The Extracellular portion of the chain corresponds to 1025–1033 (KGLMGRQNR). The helical transmembrane segment at 1034 to 1054 (TPTIVIVWSILLASIFSLLWV) threads the bilayer. Over 1055-1076 (KIDPFISPTQKAVALGQCGVNC) the chain is Cytoplasmic.

The protein belongs to the glycosyltransferase 2 family. Plant cellulose synthase subfamily. Zn(2+) is required as a cofactor. The cofactor is Mn(2+).

The protein localises to the cell membrane. It catalyses the reaction [(1-&gt;4)-beta-D-glucosyl](n) + UDP-alpha-D-glucose = [(1-&gt;4)-beta-D-glucosyl](n+1) + UDP + H(+). It participates in glycan metabolism; plant cellulose biosynthesis. Catalytic subunit of cellulose synthase terminal complexes ('rosettes'), required for beta-1,4-glucan microfibril crystallization, a major mechanism of the cell wall formation. This Oryza sativa subsp. indica (Rice) protein is Probable cellulose synthase A catalytic subunit 1 [UDP-forming] (CESA1).